We begin with the raw amino-acid sequence, 156 residues long: UPF0587 protein (156 aa).

Residues C32, C35, C64, and C67 each contribute to the Zn(2+) site.

This sequence belongs to the UPF0587 family.

The protein is UPF0587 protein of Dictyostelium discoideum (Social amoeba).